The chain runs to 310 residues: tRNA pseudouridine synthase B (310 aa).

Asp-47 serves as the catalytic Nucleophile.

This sequence belongs to the pseudouridine synthase TruB family. Type 1 subfamily.

The catalysed reaction is uridine(55) in tRNA = pseudouridine(55) in tRNA. Responsible for synthesis of pseudouridine from uracil-55 in the psi GC loop of transfer RNAs. This Caulobacter sp. (strain K31) protein is tRNA pseudouridine synthase B.